We begin with the raw amino-acid sequence, 427 residues long: Trigger factor (427 aa).

One can recognise a PPIase FKBP-type domain in the interval 163-248 (GDTVVIDFVG…VHEVKSKEVP (86 aa)).

It belongs to the FKBP-type PPIase family. Tig subfamily.

It is found in the cytoplasm. The enzyme catalyses [protein]-peptidylproline (omega=180) = [protein]-peptidylproline (omega=0). In terms of biological role, involved in protein export. Acts as a chaperone by maintaining the newly synthesized protein in an open conformation. Functions as a peptidyl-prolyl cis-trans isomerase. The polypeptide is Trigger factor (Streptococcus uberis (strain ATCC BAA-854 / 0140J)).